Consider the following 153-residue polypeptide: Probable trafficking protein particle complex subunit 2 (153 aa).

This sequence belongs to the TRAPP small subunits family. Sedlin subfamily. As to quaternary structure, part of the multisubunit TRAPP (transport protein particle) complex.

It localises to the cytoplasm. It is found in the perinuclear region. The protein resides in the endoplasmic reticulum. Its subcellular location is the golgi apparatus. Functionally, may play a role in vesicular transport from endoplasmic reticulum to Golgi. In Nematostella vectensis (Starlet sea anemone), this protein is Probable trafficking protein particle complex subunit 2.